A 382-amino-acid chain; its full sequence is Histidinol-phosphate aminotransferase (382 aa).

N6-(pyridoxal phosphate)lysine is present on K215. A disordered region spans residues 360–382; the sequence is NSNNIDNQSKTHSQTSSIRKGTI.

This sequence belongs to the class-II pyridoxal-phosphate-dependent aminotransferase family. Histidinol-phosphate aminotransferase subfamily. In terms of assembly, homodimer. Pyridoxal 5'-phosphate is required as a cofactor.

It catalyses the reaction L-histidinol phosphate + 2-oxoglutarate = 3-(imidazol-4-yl)-2-oxopropyl phosphate + L-glutamate. Its pathway is amino-acid biosynthesis; L-histidine biosynthesis; L-histidine from 5-phospho-alpha-D-ribose 1-diphosphate: step 7/9. This Yersinia pseudotuberculosis serotype IB (strain PB1/+) protein is Histidinol-phosphate aminotransferase.